A 242-amino-acid polypeptide reads, in one-letter code: uncharacterized protein (242 aa).

This is an uncharacterized protein from Agrobacterium vitis (Rhizobium vitis).